Here is a 378-residue protein sequence, read N- to C-terminus: MSTPRTIVGVSGGVDSSVAAWKLAQDGEPIAGLFMQNWADDGSGDCRAEDDRRDAVAVCGVLGIPFHFRDFSGEYWSGVFEHFLAEYAAGRTPNPDVLCNREVKFKHFLEAAQALGAERIATGHYARVAHLGGRWRLLRGADRNKDQSYFLHQLGQSQLAATLFPIGELEKSALRRIAQDAGLPTHAKKDSTGICFIGERDFREFLGRYLPARTGEIRDPQGQRIAEHPGVFYFTLGQREGLNIGGVRGRAAAPWYVVGKDVGSNVLYVDQDRDSPLLQSRWLQSEQAHWVTGAPPARSFSCTAQTRYRQPDEPCTVTVQDDGTLQVNFERPQRAVTPGQSLVLYDGEECLGGAVIAATDAPLERQLAGSSFSSEVVA.

ATP contacts are provided by residues 9 to 16 (GVSGGVDS) and Met35. The interaction with target base in tRNA stretch occupies residues 94–96 (NPD). The active-site Nucleophile is Cys99. Cys99 and Cys195 are joined by a disulfide. Residue Gly123 coordinates ATP. Positions 145–147 (KDQ) are interaction with tRNA. Cys195 (cysteine persulfide intermediate) is an active-site residue. The interval 307-308 (RY) is interaction with tRNA.

The protein belongs to the MnmA/TRMU family.

Its subcellular location is the cytoplasm. The catalysed reaction is S-sulfanyl-L-cysteinyl-[protein] + uridine(34) in tRNA + AH2 + ATP = 2-thiouridine(34) in tRNA + L-cysteinyl-[protein] + A + AMP + diphosphate + H(+). Its function is as follows. Catalyzes the 2-thiolation of uridine at the wobble position (U34) of tRNA, leading to the formation of s(2)U34. The protein is tRNA-specific 2-thiouridylase MnmA of Xanthomonas campestris pv. campestris (strain 8004).